We begin with the raw amino-acid sequence, 346 residues long: Phosphoribosylformylglycinamidine cyclo-ligase (346 aa).

The protein belongs to the AIR synthase family.

It localises to the cytoplasm. It carries out the reaction 2-formamido-N(1)-(5-O-phospho-beta-D-ribosyl)acetamidine + ATP = 5-amino-1-(5-phospho-beta-D-ribosyl)imidazole + ADP + phosphate + H(+). Its pathway is purine metabolism; IMP biosynthesis via de novo pathway; 5-amino-1-(5-phospho-D-ribosyl)imidazole from N(2)-formyl-N(1)-(5-phospho-D-ribosyl)glycinamide: step 2/2. This chain is Phosphoribosylformylglycinamidine cyclo-ligase, found in Bacillus pumilus (strain SAFR-032).